A 265-amino-acid polypeptide reads, in one-letter code: Mlc titration factor A (265 aa).

The Zn(2+) site is built by H111, H148, H152, and E211.

It belongs to the MtfA family. In terms of assembly, interacts with Mlc. The cofactor is Zn(2+).

The protein resides in the cytoplasm. Functionally, involved in the modulation of the activity of the glucose-phosphotransferase system (glucose-PTS). Interacts with the transcriptional repressor Mlc, preventing its interaction with DNA and leading to the modulation of expression of genes regulated by Mlc, including ptsG, which encodes the PTS system glucose-specific EIICB component. In terms of biological role, shows zinc-dependent metallopeptidase activity. The protein is Mlc titration factor A of Salmonella gallinarum (strain 287/91 / NCTC 13346).